Reading from the N-terminus, the 187-residue chain is Cerebral dopamine neurotrophic factor (187 aa).

The signal sequence occupies residues 1–24 (MRCTSPAALVTFCAGLWISNHVLA). 3 disulfides stabilise this stretch: C37/C124, C40/C113, and C71/C82.

It belongs to the ARMET family.

The protein localises to the secreted. Functionally, trophic factor for dopamine neurons. Prevents the 6-hydroxydopamine (6-OHDA)-induced degeneration of dopaminergic neurons. When administered after 6-OHDA-lesioning, restores the dopaminergic function and prevents the degeneration of dopaminergic neurons in substantia nigra. The polypeptide is Cerebral dopamine neurotrophic factor (Cdnf) (Rattus norvegicus (Rat)).